Reading from the N-terminus, the 834-residue chain is Periplasmic nitrate reductase (834 aa).

The tat-type signal signal peptide spans M1–A31. In terms of domain architecture, 4Fe-4S Mo/W bis-MGD-type spans I43–D99. [4Fe-4S] cluster-binding residues include C50, C53, C57, and C85. Mo-bis(molybdopterin guanine dinucleotide) contacts are provided by residues K87, Q154, N179, C183, W216–M223, S247–H251, G266–D268, M377, Q381, N487, S513–D514, K536, D563, and T723–S732. Position 799 (W799) interacts with substrate. Mo-bis(molybdopterin guanine dinucleotide) is bound by residues N807 and K824.

The protein belongs to the prokaryotic molybdopterin-containing oxidoreductase family. NasA/NapA/NarB subfamily. In terms of assembly, component of the periplasmic nitrate reductase NapAB complex composed of NapA and NapB. [4Fe-4S] cluster is required as a cofactor. The cofactor is Mo-bis(molybdopterin guanine dinucleotide). Post-translationally, predicted to be exported by the Tat system. The position of the signal peptide cleavage has not been experimentally proven.

The protein localises to the periplasm. It carries out the reaction 2 Fe(II)-[cytochrome] + nitrate + 2 H(+) = 2 Fe(III)-[cytochrome] + nitrite + H2O. In terms of biological role, catalytic subunit of the periplasmic nitrate reductase complex NapAB. Receives electrons from NapB and catalyzes the reduction of nitrate to nitrite. The sequence is that of Periplasmic nitrate reductase from Rhizobium meliloti (strain 1021) (Ensifer meliloti).